The chain runs to 347 residues: Transcription factor EC (347 aa).

The necessary for transcriptional transactivation stretch occupies residues 1–119 (MTLDHQIINP…GLTSASCPSS (119 aa)). The bHLH domain occupies 139-192 (QKKDNHNLIERRRRYNINYRIKELGTLIPKSNDPDMRWNKGTILKASVEYIKWL). The segment at 271–347 (PSPEFCDQAI…SFSSDDGDEL (77 aa)) is necessary for transcriptional transactivation. Positions 319–347 (DPLLSATSPAVSKESSRRSSFSSDDGDEL) are disordered. A compositionally biased stretch (low complexity) spans 326–341 (SPAVSKESSRRSSFSS).

The protein belongs to the MiT/TFE family. Homodimer. Forms heterodimers with MITF and TFE3. Interacts with MITF.

The protein localises to the nucleus. Functionally, transcriptional regulator that acts as a repressor or an activator. Acts as a transcriptional repressor on minimal promoter containing element F (that includes an E-box sequence). Binds to element F in an E-box sequence-specific manner. Acts as a transcriptional transactivator on the proximal promoter region of the tartrate-resistant acid phosphatase (TRAP) E-box containing promoter. Collaborates with MITF in target gene activation. Acts as a transcriptional repressor on minimal promoter containing mu E3 enhancer sequence. Binds to mu E3 DNA sequence of the immunoglobulin heavy-chain gene enhancer. Binds DNA in a homo- or heterodimeric form. In Pan troglodytes (Chimpanzee), this protein is Transcription factor EC (TFEC).